A 256-amino-acid polypeptide reads, in one-letter code: Cell division protein FtsQ (256 aa).

Residues 1-23 (MIKAVKMNTSFDKEKVRKHLPGA) are Cytoplasmic-facing. The helical transmembrane segment at 24 to 44 (IFLSLVVITSLWLVISTISWM) threads the bilayer. The Periplasmic segment spans residues 45–256 (TDEDRLPLSH…SDDVENKEEN (212 aa)). Positions 50–120 (LPLSHMIIQG…ETIKVFVVEH (71 aa)) constitute a POTRA domain.

This sequence belongs to the FtsQ/DivIB family. FtsQ subfamily. As to quaternary structure, part of a complex composed of FtsB, FtsL and FtsQ.

The protein localises to the cell inner membrane. Essential cell division protein. May link together the upstream cell division proteins, which are predominantly cytoplasmic, with the downstream cell division proteins, which are predominantly periplasmic. May control correct divisome assembly. In Aliivibrio fischeri (strain ATCC 700601 / ES114) (Vibrio fischeri), this protein is Cell division protein FtsQ.